The following is a 392-amino-acid chain: Phospho-N-acetylmuramoyl-pentapeptide-transferase (392 aa).

Helical transmembrane passes span 28–48 (IIAA…KLIA), 76–96 (TMGG…FADL), 101–121 (VWVM…DDWL), 137–157 (MVLQ…TWTL), 181–201 (WFNP…VVGT), 213–233 (GLAI…CYVA), 268–288 (GAEL…FLWF), 295–315 (VFMG…LAML), 320–340 (VVSA…MIQV), and 369–389 (KIIV…LLSL).

It belongs to the glycosyltransferase 4 family. MraY subfamily. The cofactor is Mg(2+).

Its subcellular location is the cell inner membrane. The catalysed reaction is UDP-N-acetyl-alpha-D-muramoyl-L-alanyl-gamma-D-glutamyl-meso-2,6-diaminopimeloyl-D-alanyl-D-alanine + di-trans,octa-cis-undecaprenyl phosphate = di-trans,octa-cis-undecaprenyl diphospho-N-acetyl-alpha-D-muramoyl-L-alanyl-D-glutamyl-meso-2,6-diaminopimeloyl-D-alanyl-D-alanine + UMP. Its pathway is cell wall biogenesis; peptidoglycan biosynthesis. In terms of biological role, catalyzes the initial step of the lipid cycle reactions in the biosynthesis of the cell wall peptidoglycan: transfers peptidoglycan precursor phospho-MurNAc-pentapeptide from UDP-MurNAc-pentapeptide onto the lipid carrier undecaprenyl phosphate, yielding undecaprenyl-pyrophosphoryl-MurNAc-pentapeptide, known as lipid I. The sequence is that of Phospho-N-acetylmuramoyl-pentapeptide-transferase from Myxococcus xanthus (strain DK1622).